The following is a 560-amino-acid chain: NAD(P)H-quinone oxidoreductase chain 4-3 (560 aa).

A run of 14 helical transmembrane segments spans residues 5-25 (FPWLTAIILLPLVASAFIPLL), 35-55 (WYALGVGIADFVLMCYTFWHH), 86-106 (ISMPLVLLAGFVTTLSMLAAW), 114-134 (LFYFLMLVLYSAQIGVFVAQD), 135-155 (LLLFFIMWELELVPVYLLVSI), 168-188 (FLLYTAAASIFILIAGLAMAL), 208-228 (ALELLLYAGLLIAFGVKLAIF), 242-262 (SAPVSMILAGVLLKMGGYGLI), 273-293 (HIYFAPVLATLGVINIIYGGL), 310-330 (VSHMGFVLLGIASFTDVGVSG), 331-351 (AMLQMLSHGLIAAVLFFLAGV), 374-394 (VFALFTAGTMASLALPGMSGF), 417-437 (VMVFLAAVGVILTPIYLLSML), and 488-508 (VFIAVSFLVLIIGVGVYPKIA).

The protein belongs to the complex I subunit 4 family.

The protein localises to the cellular thylakoid membrane. The enzyme catalyses a plastoquinone + NADH + (n+1) H(+)(in) = a plastoquinol + NAD(+) + n H(+)(out). The catalysed reaction is a plastoquinone + NADPH + (n+1) H(+)(in) = a plastoquinol + NADP(+) + n H(+)(out). Functionally, NDH-1 shuttles electrons from NAD(P)H, via FMN and iron-sulfur (Fe-S) centers, to quinones in the respiratory chain. The immediate electron acceptor for the enzyme in this species is believed to be plastoquinone. Couples the redox reaction to proton translocation (for every two electrons transferred, four hydrogen ions are translocated across the cytoplasmic membrane), and thus conserves the redox energy in a proton gradient. In Nostoc sp. (strain PCC 7120 / SAG 25.82 / UTEX 2576), this protein is NAD(P)H-quinone oxidoreductase chain 4-3 (ndhD3).